The chain runs to 172 residues: Signal peptidase complex catalytic subunit sec11 (172 aa).

At 1-14 (MLSGLANPRQAAVQ) the chain is on the cytoplasmic side. Residues 15-35 (LMNFGLILSTAFMMWKGISVI) traverse the membrane as a helical; Signal-anchor for type II membrane protein segment. Topologically, residues 36-172 (TDSPSPIVVV…MGLVVVLQRE (137 aa)) are lumenal. Active-site charge relay system residues include Ser49 and His90. N-linked (GlcNAc...) asparagine glycosylation is present at Asn111. Asp115 functions as the Charge relay system in the catalytic mechanism. The interval 158-169 (VMLGLMGLVVVL) is C-terminal short (CTS) helix.

The protein belongs to the peptidase S26B family. As to quaternary structure, component of the signal peptidase complex (SPC) composed of a catalytic subunit SEC11 and three accessory subunits SPC1, SPC2 and SPC3. The complex induces a local thinning of the ER membrane which is used to measure the length of the signal peptide (SP) h-region of protein substrates. This ensures the selectivity of the complex towards h-regions shorter than 18-20 amino acids. SPC associates with the translocon complex.

The protein localises to the endoplasmic reticulum membrane. It catalyses the reaction Cleavage of hydrophobic, N-terminal signal or leader sequences from secreted and periplasmic proteins.. Catalytic component of the signal peptidase complex (SPC) which catalyzes the cleavage of N-terminal signal sequences from nascent proteins as they are translocated into the lumen of the endoplasmic reticulum. Specifically cleaves N-terminal signal peptides that contain a hydrophobic alpha-helix (h-region) shorter than 18-20 amino acids. The sequence is that of Signal peptidase complex catalytic subunit sec11 (sec11) from Neurospora crassa (strain ATCC 24698 / 74-OR23-1A / CBS 708.71 / DSM 1257 / FGSC 987).